The primary structure comprises 557 residues: Hemolysin transporter protein ShlB (557 aa).

The signal sequence occupies residues 1-18; that stretch reads MIKKITALTLLVSTALSA. Residues 79-152 enclose the POTRA domain; the sequence is LPIAGVYLQG…GELGLSVTEG (74 aa).

It belongs to the TPS (TC 1.B.20) family.

It localises to the cell outer membrane. In terms of biological role, interacts with the cell-bound hemolysin. Necessary for the extracellular secretion and activation of hemolysin. Its function is as follows. Member of a two partner secretion pathway (TPS) in which it mediates the secretion of hemolysin. The chain is Hemolysin transporter protein ShlB (shlB) from Serratia marcescens.